The sequence spans 259 residues: 3-deoxy-manno-octulosonate cytidylyltransferase (259 aa).

The protein belongs to the KdsB family.

It is found in the cytoplasm. The catalysed reaction is 3-deoxy-alpha-D-manno-oct-2-ulosonate + CTP = CMP-3-deoxy-beta-D-manno-octulosonate + diphosphate. It functions in the pathway nucleotide-sugar biosynthesis; CMP-3-deoxy-D-manno-octulosonate biosynthesis; CMP-3-deoxy-D-manno-octulosonate from 3-deoxy-D-manno-octulosonate and CTP: step 1/1. The protein operates within bacterial outer membrane biogenesis; lipopolysaccharide biosynthesis. Its function is as follows. Activates KDO (a required 8-carbon sugar) for incorporation into bacterial lipopolysaccharide in Gram-negative bacteria. The polypeptide is 3-deoxy-manno-octulosonate cytidylyltransferase (Maricaulis maris (strain MCS10) (Caulobacter maris)).